The sequence spans 362 residues: Putative membrane-bound acyltransferase YfiQ (362 aa).

Transmembrane regions (helical) follow at residues 11 to 31 (CISC…MLQA), 44 to 64 (FRTL…FLLA), 82 to 102 (VIFV…TSAM), 119 to 139 (VFLG…YMLH), 153 to 173 (WVLS…SAAS), 181 to 201 (GGAF…FCLA), 220 to 240 (WVVY…SYVG), 252 to 267 (IMLY…FHLF), 283 to 303 (YSFS…VLLL), and 308 to 328 (IPAV…PIMT).

This sequence belongs to the acyltransferase 3 family.

The protein localises to the cell membrane. The protein is Putative membrane-bound acyltransferase YfiQ (yfiQ) of Bacillus subtilis (strain 168).